Consider the following 259-residue polypeptide: Global transcriptional regulator CodY (259 aa).

A GAF domain region spans residues 1–155 (MALLQKTRII…GATVVGMEIL (155 aa)). The H-T-H motif DNA-binding region spans 203–222 (ASKIADRVGITRSVIVNALR). Residue Ser215 is modified to Phosphoserine.

It belongs to the CodY family.

The protein resides in the cytoplasm. DNA-binding global transcriptional regulator which is involved in the adaptive response to starvation and acts by directly or indirectly controlling the expression of numerous genes in response to nutrient availability. During rapid exponential growth, CodY is highly active and represses genes whose products allow adaptation to nutrient depletion. The protein is Global transcriptional regulator CodY of Bacillus pumilus (strain SAFR-032).